The following is a 161-amino-acid chain: Allophycocyanin alpha chain (161 aa).

N4-methylasparagine is present on N71. C81 serves as a coordination point for (2R,3E)-phycocyanobilin.

Belongs to the phycobiliprotein family. Heterodimer of an alpha and a beta chain. Post-translationally, contains one covalently linked phycocyanobilin chromophore.

It localises to the plastid. It is found in the chloroplast thylakoid membrane. In terms of biological role, light-harvesting photosynthetic bile pigment-protein from the phycobiliprotein complex. Allophycocyanin has a maximum absorption at approximately 650 nanometers. In Porphyra purpurea (Red seaweed), this protein is Allophycocyanin alpha chain (apcA).